The following is a 257-amino-acid chain: Putative hydro-lyase YcsI (257 aa).

The protein belongs to the D-glutamate cyclase family.

This chain is Putative hydro-lyase YcsI (ycsI), found in Bacillus subtilis (strain 168).